Here is a 374-residue protein sequence, read N- to C-terminus: Putative serine/threonine-protein kinase ZK507.3 (374 aa).

A Protein kinase domain is found at 25–296 (WKVIVELGKG…CKLTLKEPLV (272 aa)). ATP contacts are provided by residues 31–39 (LGKGGYGTV) and Lys-60. Residue Asp-158 is the Proton acceptor of the active site. The tract at residues 302–374 (NDNESGSTPT…KTRNKKPSRK (73 aa)) is disordered. The segment covering 306–324 (SGSTPTTSATACSPSSSTG) has biased composition (low complexity). Over residues 334–343 (IASNIDQKSI) the composition is skewed to polar residues. Basic residues predominate over residues 364 to 374 (TKTRNKKPSRK).

It belongs to the protein kinase superfamily. Ser/Thr protein kinase family.

The enzyme catalyses L-seryl-[protein] + ATP = O-phospho-L-seryl-[protein] + ADP + H(+). The catalysed reaction is L-threonyl-[protein] + ATP = O-phospho-L-threonyl-[protein] + ADP + H(+). This Caenorhabditis elegans protein is Putative serine/threonine-protein kinase ZK507.3.